Here is a 228-residue protein sequence, read N- to C-terminus: tRNA (guanine-N(1)-)-methyltransferase (228 aa).

S-adenosyl-L-methionine contacts are provided by residues Gly-111 and 130-135 (IGDFVL).

Belongs to the RNA methyltransferase TrmD family. In terms of assembly, homodimer.

The protein localises to the cytoplasm. The catalysed reaction is guanosine(37) in tRNA + S-adenosyl-L-methionine = N(1)-methylguanosine(37) in tRNA + S-adenosyl-L-homocysteine + H(+). Its function is as follows. Specifically methylates guanosine-37 in various tRNAs. This is tRNA (guanine-N(1)-)-methyltransferase from Ureaplasma parvum serovar 3 (strain ATCC 27815 / 27 / NCTC 11736).